The chain runs to 1813 residues: Latent-transforming growth factor beta-binding protein 2 (1813 aa).

The signal sequence occupies residues 1–35 (MRAPTTARCSGCIQRVRWRGFLPLVLAVLMGTSHA). Positions 94–115 (NPGWLAEAEARRPPRTQQLRRV) are heparin-binding. A disordered region spans residues 103 to 152 (ARRPPRTQQLRRVQPPVQTRRSHPRGQQQIAARAAPSVARLETPQRPAAA). Polar residues predominate over residues 108–132 (RTQQLRRVQPPVQTRRSHPRGQQQI). Asn175 is a glycosylation site (N-linked (GlcNAc...) asparagine). The region spanning 181–213 (IKPVCQPPCQNRGSCSRPQVCICRSGFRGARCE) is the EGF-like 1 domain. Cystine bridges form between Cys185/Cys195, Cys189/Cys201, and Cys203/Cys212. The tract at residues 220 to 305 (EFDPQNARPV…QLMSNALPSG (86 aa)) is disordered. Positions 226–243 (ARPVPRRSVERAPGPHRS) are heparin-binding. Residues 257 to 266 (LVPPPSPPPS) show a composition bias toward pro residues. The segment covering 293-302 (ANGQLMSNAL) has biased composition (polar residues). A glycan (N-linked (GlcNAc...) asparagine) is linked at Asn328. 329-339 (LTEKIKKIKVV) contacts heparin. In terms of domain architecture, EGF-like 2 spans 381-413 (RIYFCQIPCLNGGRCIGRDECWCPANSTGKFCH). Disulfide bonds link Cys385–Cys395, Cys389–Cys401, and Cys403–Cys412. Asn406 carries an N-linked (GlcNAc...) asparagine glycan. At Ser491 the chain carries Phosphoserine. Positions 492 to 524 (VETRASHRPHGNLGHSPWASNSIPARAGEAPRP) are disordered. Residues 536 to 588 (GQCYLSTVNGQCANPLGSLTSQEDCCGSVGTFWGVTSCAPCPPRQEGPAFPVI) form the TB 1 domain. Disulfide bonds link Cys538–Cys560, Cys547–Cys573, and Cys561–Cys576. Asn603 carries N-linked (GlcNAc...) asparagine glycosylation. Positions 609–649 (DINECLTLGLCKDSECVNTRGSYLCTCRPGLMLDPSRSRCV) constitute an EGF-like 3; calcium-binding domain. 7 disulfides stabilise this stretch: Cys613–Cys624, Cys619–Cys633, Cys635–Cys648, Cys661–Cys683, Cys670–Cys696, Cys684–Cys699, and Cys685–Cys711. One can recognise a TB 2 domain in the interval 659–711 (GLCYRSLGSGTCTLPLVHRITKQICCCSRVGKAWGSTCEQCPLPGTEAFREIC). Disordered regions lie at residues 730 to 761 (KAEE…QPLR) and 787 to 819 (SAPH…PAEE). The EGF-like 4 domain maps to 835-877 (DFDPCFAGASNICGPGTCVSLPNGYRCVCSPGYQLHPSQDYCT). 49 disulfide bridges follow: Cys839/Cys852, Cys847/Cys861, Cys863/Cys876, Cys882/Cys893, Cys887/Cys902, Cys904/Cys919, Cys925/Cys936, Cys931/Cys945, Cys947/Cys959, Cys965/Cys976, Cys971/Cys985, Cys988/Cys999, Cys1005/Cys1016, Cys1011/Cys1025, Cys1027/Cys1040, Cys1046/Cys1057, Cys1052/Cys1066, Cys1069/Cys1082, Cys1088/Cys1099, Cys1094/Cys1108, Cys1111/Cys1124, Cys1130/Cys1142, Cys1137/Cys1151, Cys1153/Cys1165, Cys1171/Cys1183, Cys1177/Cys1192, Cys1194/Cys1207, Cys1213/Cys1224, Cys1219/Cys1233, Cys1235/Cys1249, Cys1255/Cys1268, Cys1263/Cys1277, Cys1281/Cys1293, Cys1299/Cys1311, Cys1305/Cys1320, Cys1322/Cys1335, Cys1341/Cys1353, Cys1348/Cys1362, Cys1364/Cys1378, Cys1405/Cys1428, Cys1415/Cys1440, Cys1429/Cys1443, Cys1430/Cys1455, Cys1481/Cys1494, Cys1489/Cys1503, Cys1505/Cys1518, Cys1524/Cys1534, Cys1529/Cys1543, and Cys1545/Cys1558. The EGF-like 5; calcium-binding domain maps to 878 to 920 (DDNECMRNPCEGRGRCVNSVGSYSCLCYPGYTLVTLGDTQECQ). Residues 921–960 (DIDECEQPGVCSGGRCSNTEGSYHCECDRGYIMVRKGHCQ) enclose the EGF-like 6; calcium-binding domain. Residues 961–1000 (DINECRHPGTCPDGRCVNSPGSYTCLACEEGYVGQSGSCV) form the EGF-like 7; calcium-binding domain. An EGF-like 8; calcium-binding domain is found at 1001–1041 (DVNECLTPGICTHGRCINMEGSFRCSCEPGYEVTPDKKGCR). One can recognise an EGF-like 9; calcium-binding domain in the interval 1042–1083 (DVDECASRASCPTGLCLNTEGSFTCSACQSGYWVNEDGTACE). The EGF-like 10; calcium-binding domain maps to 1084 to 1125 (DLDECAFPGVCPTGVCTNTVGSFSCKDCDQGYRPNPLGNRCE). An EGF-like 11; calcium-binding domain is found at 1126 to 1166 (DVDECEGPQSSCRGGECKNTEGSYQCLCHQGFQLVNGTMCE). Asn1161 carries an N-linked (GlcNAc...) asparagine glycan. An EGF-like 12; calcium-binding domain is found at 1167–1208 (DVNECVGEEHCAPHGECLNSLGSFFCLCAPGFASAEGGTRCQ). The region spanning 1209-1250 (DVDECAATDPCPGGHCVNTEGSFSCLCETASFQPSPDSGECL) is the EGF-like 13; calcium-binding domain. Residues 1251–1294 (DIDECEDREDPVCGAWRCENSPGSYRCILDCQPGFYVAPNGDCI) enclose the EGF-like 14; calcium-binding domain. The EGF-like 15; calcium-binding domain maps to 1295-1336 (DIDECANDTVCGNHGFCDNTDGSFRCLCDQGFETSPSGWECV). N-linked (GlcNAc...) asparagine glycosylation occurs at Asn1301. One can recognise an EGF-like 16; calcium-binding domain in the interval 1337-1379 (DVNECELMMAVCGDALCENVEGSFLCLCASDLEEYDAEEGHCR). Positions 1403–1455 (MECYSEHNGGPPCSQILGQNSTQAECCCTQGARWGKACAPCPSEDSVEFSQLC) constitute a TB 3 domain. Asn1422 carries N-linked (GlcNAc...) asparagine glycosylation. An EGF-like 17; calcium-binding domain is found at 1477–1519 (DADECVLFGPALCQNGRCSNIVPGYICLCNPGYHYDASSRKCQ). Positions 1520-1559 (DHNECQDLACENGECVNQEGSFHCLCNPPLTLDLSGQRCV) constitute an EGF-like 18; calcium-binding domain. A glycan (N-linked (GlcNAc...) asparagine) is linked at Asn1560. The TB 4 domain maps to 1576–1628 (DICWKKVTNDVCSQPLRGHHTTYTECCCQDGEAWSQQCALCPPRSSEVYAQLC). 4 disulfide bridges follow: Cys1578–Cys1601, Cys1587–Cys1613, Cys1602–Cys1616, and Cys1603–Cys1628. Residues 1631-1813 (ARIEAERGAG…PGPPHCAAKE (183 aa)) form a C-terminal domain region. Positions 1671–1717 (YLGPEDTAPEPPFSNPASQPGDNTPVLEPPLQPSELQPHYLASHSEP) are disordered. Residues 1725–1765 (QAEECGILNGCENGRCVRVREGYTCDCFEGFQLDAPTLACV) enclose the EGF-like 19; calcium-binding domain. 6 disulfides stabilise this stretch: Cys1729-Cys1740, Cys1735-Cys1749, Cys1751-Cys1764, Cys1770-Cys1785, Cys1780-Cys1794, and Cys1796-Cys1809. The EGF-like 20; calcium-binding domain maps to 1766–1810 (DVNECEDLNGPARLCAHGHCENTEGSYRCHCSPGYVAEPGPPHCA).

This sequence belongs to the LTBP family. In terms of assembly, forms part of the large latent transforming growth factor beta precursor complex; removal is essential for activation of complex. Interacts with SDC4. Interacts (via C-terminal domain) with FBN1 (via N-terminal domain) in a Ca(+2)-dependent manner. In terms of processing, N-Glycosylated. Contains hydroxylated asparagine residues. As to expression, expressed in the anterior chamber of the eye.

It localises to the secreted. The protein resides in the extracellular space. The protein localises to the extracellular matrix. In terms of biological role, may play an integral structural role in elastic-fiber architectural organization and/or assembly. This is Latent-transforming growth factor beta-binding protein 2 (Ltbp2) from Mus musculus (Mouse).